Consider the following 541-residue polypeptide: Nucleoporin NUP57 (541 aa).

Low complexity predominate over residues 1-13 (MFGFSGSNNGFGN). A disordered region spans residues 1–261 (MFGFSGSNNG…STGSNLQQQQ (261 aa)). 2 FG repeats span residues 2 to 3 (FG) and 11 to 12 (FG). Over residues 19–36 (TGFSFGQNNNNTNTQPSA) the composition is skewed to polar residues. FXFG repeat units lie at residues 21–24 (FSFG) and 39–42 (FGFG). 2 FG repeats span residues 56–57 (FG) and 65–66 (FG). A compositionally biased stretch (polar residues) spans 58–72 (ANQATNTFGSNQQSS). Residues 76–79 (GLFG) form a GLFG 1 repeat. Residues 83–102 (ALGSLGSSSTTASGTTATGT) show a composition bias toward low complexity. GLFG repeat units follow at residues 103–106 (GLFG), 120–123 (GLFG), 132–135 (GLFG), and 147–150 (GLFG). A compositionally biased stretch (polar residues) spans 105 to 116 (FGQQTAQPQQST). Residues 125–146 (KPTTTTGGLFGNSAQNNSTTSG) are compositionally biased toward polar residues. Residues 153–172 (VGSTGSLMGGNSTQNTSNMN) show a composition bias toward polar residues. 4 GLFG repeats span residues 175–178 (GLFG), 190–193 (GLFG), 204–207 (GLFG), and 220–223 (GLFG). Residues 228–257 (PQTNTAPGLGNTVSTQPSFAWSKPSTGSNL) show a composition bias toward polar residues. A coiled-coil region spans residues 398 to 425 (ILKAQSRNVEIEKRILKLGTQLATLKNR).

Belongs to the nucleoporin GLFG family. As to quaternary structure, component of the nuclear pore complex (NPC). NPC constitutes the exclusive means of nucleocytoplasmic transport. NPCs allow the passive diffusion of ions and small molecules and the active, nuclear transport receptor-mediated bidirectional transport of macromolecules such as proteins, RNAs, ribonucleoparticles (RNPs), and ribosomal subunits across the nuclear envelope. Due to its 8-fold rotational symmetry, all subunits are present with 8 copies or multiples thereof. NUP57 is part of the NUP57 subcomplex (NIC96, NSP1, NUP49, NUP57) interacting with NUP49 and NSP1. Interacts through its FG repeats with karyopherins.

It localises to the nucleus. The protein resides in the nuclear pore complex. It is found in the nucleus membrane. In terms of biological role, functions as a component of the nuclear pore complex (NPC). NPC components, collectively referred to as nucleoporins (NUPs), can play the role of both NPC structural components and of docking or interaction partners for transiently associated nuclear transport factors. Active directional transport is assured by both, a Phe-Gly (FG) repeat affinity gradient for these transport factors across the NPC and a transport cofactor concentration gradient across the nuclear envelope (GSP1 and GSP2 GTPases associated predominantly with GTP in the nucleus, with GDP in the cytoplasm). NUP57 plays an important role in several nuclear transport pathways including poly(A)+ RNA, tRNA, and pre-ribosome transport. The chain is Nucleoporin NUP57 (NUP57) from Saccharomyces cerevisiae (strain ATCC 204508 / S288c) (Baker's yeast).